Here is a 233-residue protein sequence, read N- to C-terminus: Lipoprotein-releasing system ATP-binding protein LolD (233 aa).

The 228-residue stretch at 6-233 (LQCDNLCKRY…TAELSLMGAE (228 aa)) folds into the ABC transporter domain. 42 to 49 (GSSGSGKS) is a binding site for ATP.

It belongs to the ABC transporter superfamily. Lipoprotein translocase (TC 3.A.1.125) family. As to quaternary structure, the complex is composed of two ATP-binding proteins (LolD) and two transmembrane proteins (LolC and LolE).

It is found in the cell inner membrane. Its function is as follows. Part of the ABC transporter complex LolCDE involved in the translocation of mature outer membrane-directed lipoproteins, from the inner membrane to the periplasmic chaperone, LolA. Responsible for the formation of the LolA-lipoprotein complex in an ATP-dependent manner. Such a release is dependent of the sorting-signal (absence of an Asp at position 2 of the mature lipoprotein) and of LolA. This chain is Lipoprotein-releasing system ATP-binding protein LolD, found in Escherichia coli (strain K12).